Here is a 357-residue protein sequence, read N- to C-terminus: Thiamine thiazole synthase, chloroplastic (357 aa).

Substrate contacts are provided by residues alanine 102, 123–124 (EQ), glycine 131, and valine 196. 2,3-didehydroalanine (Cys) is present on cysteine 233. Substrate contacts are provided by residues aspartate 235, histidine 250, methionine 304, and 314-316 (RMG).

The protein belongs to the THI4 family. Homooctamer. The cofactor is Fe cation. During the catalytic reaction, a sulfide is transferred from Cys-233 to a reaction intermediate, generating a dehydroalanine residue.

The protein localises to the plastid. The protein resides in the chloroplast. The catalysed reaction is [ADP-thiazole synthase]-L-cysteine + glycine + NAD(+) = [ADP-thiazole synthase]-dehydroalanine + ADP-5-ethyl-4-methylthiazole-2-carboxylate + nicotinamide + 3 H2O + 2 H(+). Functionally, involved in biosynthesis of the thiamine precursor thiazole. Catalyzes the conversion of NAD and glycine to adenosine diphosphate 5-(2-hydroxyethyl)-4-methylthiazole-2-carboxylic acid (ADT), an adenylated thiazole intermediate. The reaction includes an iron-dependent sulfide transfer from a conserved cysteine residue of the protein to a thiazole intermediate. The enzyme can only undergo a single turnover, which suggests it is a suicide enzyme. May have additional roles in adaptation to various stress conditions and in DNA damage tolerance. This chain is Thiamine thiazole synthase, chloroplastic, found in Chlamydomonas reinhardtii (Chlamydomonas smithii).